A 357-amino-acid chain; its full sequence is DNA replication and repair protein RecF (357 aa).

31–38 (GQNGAGKT) is a binding site for ATP.

The protein belongs to the RecF family.

It is found in the cytoplasm. Its function is as follows. The RecF protein is involved in DNA metabolism; it is required for DNA replication and normal SOS inducibility. RecF binds preferentially to single-stranded, linear DNA. It also seems to bind ATP. This is DNA replication and repair protein RecF from Coxiella burnetii (strain RSA 493 / Nine Mile phase I).